We begin with the raw amino-acid sequence, 313 residues long: Ribonuclease HIII (313 aa).

A disordered region spans residues 62 to 88 (AERWTADAETPAPKKPASKKSIPSVYQ). The 217-residue stretch at 96-312 (MSVIGSDEVG…TQKAKRIASK (217 aa)) folds into the RNase H type-2 domain. A divalent metal cation contacts are provided by D102, E103, and D207.

The protein belongs to the RNase HII family. RnhC subfamily. Mn(2+) is required as a cofactor. Requires Mg(2+) as cofactor.

The protein localises to the cytoplasm. The catalysed reaction is Endonucleolytic cleavage to 5'-phosphomonoester.. Its function is as follows. Endonuclease that specifically degrades the RNA of RNA-DNA hybrids. The chain is Ribonuclease HIII from Bacillus licheniformis (strain ATCC 14580 / DSM 13 / JCM 2505 / CCUG 7422 / NBRC 12200 / NCIMB 9375 / NCTC 10341 / NRRL NRS-1264 / Gibson 46).